Reading from the N-terminus, the 313-residue chain is ADP-L-glycero-D-manno-heptose-6-epimerase (313 aa).

NADP(+) contacts are provided by residues 10 to 11, 31 to 32, K38, R53, 75 to 79, and N92; these read MI, DN, and EGACS. Y139 functions as the Proton acceptor in the catalytic mechanism. K143 contacts NADP(+). N174 provides a ligand contact to substrate. Residues V175 and K183 each coordinate NADP(+). K183 functions as the Proton acceptor in the catalytic mechanism. Residues S185, H192, 206-209, R214, and Y277 each bind substrate; that span reads FEGS.

The protein belongs to the NAD(P)-dependent epimerase/dehydratase family. HldD subfamily. In terms of assembly, homopentamer. The cofactor is NADP(+).

It catalyses the reaction ADP-D-glycero-beta-D-manno-heptose = ADP-L-glycero-beta-D-manno-heptose. Its pathway is nucleotide-sugar biosynthesis; ADP-L-glycero-beta-D-manno-heptose biosynthesis; ADP-L-glycero-beta-D-manno-heptose from D-glycero-beta-D-manno-heptose 7-phosphate: step 4/4. The protein operates within bacterial outer membrane biogenesis; LPS core biosynthesis. Functionally, catalyzes the interconversion between ADP-D-glycero-beta-D-manno-heptose and ADP-L-glycero-beta-D-manno-heptose via an epimerization at carbon 6 of the heptose. This Vibrio parahaemolyticus serotype O3:K6 (strain RIMD 2210633) protein is ADP-L-glycero-D-manno-heptose-6-epimerase.